We begin with the raw amino-acid sequence, 702 residues long: BRCA1-associated RING domain protein 1 (702 aa).

An RING-type zinc finger spans residues 18–67; it reads CVKCKKPRGDLQYLGSSCKHAYCWECIATFQQKPSGKRSSVARHMCPSCA. 2 disordered regions span residues 153 to 205 and 281 to 346; these read DENR…TSVK and ASMS…YGTR. A compositionally biased stretch (polar residues) spans 174–188; sequence ASPTRNSTKRPSTVS. Over residues 312 to 321 the composition is skewed to basic and acidic residues; sequence IKSDKIERRS. 3 ANK repeats span residues 347–376, 379–408, and 413–442; these read RGEAVLVNSIRNNRIPQLRSAVEAGTCVNE, DGKTPLYVAVENSSLEAVKILVEAGAVINA, and TLETTLHEAVRRQNTQIVEYLLSKGASIKI. The region spanning 601–702 is the BRCT domain; that stretch reads MQPKLFAGCK…LGCSITTPPH (102 aa).

As to quaternary structure, heterodimer (via RING-type zinc finger) with brc-1 to form the core CeBCD complex. Brc-1-brd-1 heterodimer-containing CeBCD complexes bound to chromatin are activated as an E3-ubiquitin ligase in response to DNA damage. The heterodimer interacts with the recombinase rad-51 following ionizing irradiation; the interaction is direct. The heterodimer interacts the E2-ubiquitin-conjugating enzyme let-70 following ionizing irradiation. The heterodimer interacts with the pro-crossover proteins msh-5 and syp-3. Interacts with smt-3, tac-1 and ubc-9. Post-translationally, autoubiquitinated. In terms of processing, phosphorylation of CeBCD complexes is required for E3 ubiquitin-protein ligase activity.

It is found in the cytoplasm. The protein resides in the nucleus. The protein localises to the chromosome. It catalyses the reaction S-ubiquitinyl-[E2 ubiquitin-conjugating enzyme]-L-cysteine + [acceptor protein]-L-lysine = [E2 ubiquitin-conjugating enzyme]-L-cysteine + N(6)-ubiquitinyl-[acceptor protein]-L-lysine.. The protein operates within protein modification; protein ubiquitination. With respect to regulation, E3 ubiquitin-protein ligase activity of CeBCD complexes occurs at DNA damage sites. Following DNA damage, E3 ubiquitin-protein ligase activity is reduced by caffeine treatment (inhibitor of ATM and ATK kinase activity). Its function is as follows. Constituent of the CeBCD complex that possesses E3 ubiquitin-protein ligase activity. When bound to chromatin, the brc-1-brd-1 heterodimer within the CeBCD complex is inactive during normal conditions, but in response to DNA damage, the brc-1-brd-1 heterodimer associates with other proteins such as the recombinase rad-51 or the E2-ubiquitin-conjugating enzyme let-70, which activate the CeBCD complex as an E3-ubiquitin ligase. Moreover, association between the brc-1-brd-1 heterodimer and rad-51 and let-70, probably requires DNA checkpoint proteins such as atl-1 and mre-11 in order to induce ubiquitination at DNA damage sites. To this end, the brc-1-brd-1 heterodimer coordinates a diverse range of cellular pathways such as DNA damage repair, ubiquitination and transcriptional regulation to maintain genomic stability. Plays a role in triggering cellular responses at damage sites in response to DNA damage that may be induced by ionizing radiation for example. In particular, protects against chromosome non-disjunction and nuclear fragmentation during meiotic double-strand break repair to ensure sister chromatid recombination and aid chromosome stability. This Caenorhabditis elegans protein is BRCA1-associated RING domain protein 1.